Here is a 140-residue protein sequence, read N- to C-terminus: Transcription antitermination protein NusB (140 aa).

Belongs to the NusB family.

In terms of biological role, involved in transcription antitermination. Required for transcription of ribosomal RNA (rRNA) genes. Binds specifically to the boxA antiterminator sequence of the ribosomal RNA (rrn) operons. This Streptococcus pneumoniae serotype 2 (strain D39 / NCTC 7466) protein is Transcription antitermination protein NusB.